Here is a 259-residue protein sequence, read N- to C-terminus: Hydroxyethylthiazole kinase 1 (259 aa).

Met-38 contacts substrate. Arg-113 and Ser-158 together coordinate ATP. Gly-185 lines the substrate pocket.

The protein belongs to the Thz kinase family. It depends on Mg(2+) as a cofactor.

It carries out the reaction 5-(2-hydroxyethyl)-4-methylthiazole + ATP = 4-methyl-5-(2-phosphooxyethyl)-thiazole + ADP + H(+). The protein operates within cofactor biosynthesis; thiamine diphosphate biosynthesis; 4-methyl-5-(2-phosphoethyl)-thiazole from 5-(2-hydroxyethyl)-4-methylthiazole: step 1/1. In terms of biological role, catalyzes the phosphorylation of the hydroxyl group of 4-methyl-5-beta-hydroxyethylthiazole (THZ). The polypeptide is Hydroxyethylthiazole kinase 1 (Leuconostoc mesenteroides subsp. mesenteroides (strain ATCC 8293 / DSM 20343 / BCRC 11652 / CCM 1803 / JCM 6124 / NCDO 523 / NBRC 100496 / NCIMB 8023 / NCTC 12954 / NRRL B-1118 / 37Y)).